The chain runs to 511 residues: ATP synthase subunit alpha (511 aa).

169–176 (GDRQTGKT) provides a ligand contact to ATP.

This sequence belongs to the ATPase alpha/beta chains family. In terms of assembly, F-type ATPases have 2 components, CF(1) - the catalytic core - and CF(0) - the membrane proton channel. CF(1) has five subunits: alpha(3), beta(3), gamma(1), delta(1), epsilon(1). CF(0) has three main subunits: a(1), b(2) and c(9-12). The alpha and beta chains form an alternating ring which encloses part of the gamma chain. CF(1) is attached to CF(0) by a central stalk formed by the gamma and epsilon chains, while a peripheral stalk is formed by the delta and b chains.

Its subcellular location is the cell inner membrane. It carries out the reaction ATP + H2O + 4 H(+)(in) = ADP + phosphate + 5 H(+)(out). Its function is as follows. Produces ATP from ADP in the presence of a proton gradient across the membrane. The alpha chain is a regulatory subunit. The polypeptide is ATP synthase subunit alpha (Bartonella henselae (strain ATCC 49882 / DSM 28221 / CCUG 30454 / Houston 1) (Rochalimaea henselae)).